The sequence spans 426 residues: Glucose-6-phosphate isomerase (426 aa).

The Proton donor role is filled by Glu-282. Residues His-303 and Lys-417 contribute to the active site.

The protein belongs to the GPI family.

The protein resides in the cytoplasm. The enzyme catalyses alpha-D-glucose 6-phosphate = beta-D-fructose 6-phosphate. The protein operates within carbohydrate biosynthesis; gluconeogenesis. It functions in the pathway carbohydrate degradation; glycolysis; D-glyceraldehyde 3-phosphate and glycerone phosphate from D-glucose: step 2/4. Its function is as follows. Catalyzes the reversible isomerization of glucose-6-phosphate to fructose-6-phosphate. The sequence is that of Glucose-6-phosphate isomerase from Onion yellows phytoplasma (strain OY-M).